A 692-amino-acid chain; its full sequence is MYSQHGAPMAPPQKPETFMLSNEAQQSLPHDAQVALQQVDNLKYFLLSAPVDWQPDQLIRRFLLPTGDYISCVLWSNLFHISGTDIVRCLAFRFQAFGRPVKNSKKFEEGIFSDLRNLKAGTDATLEEPKSPFLDFLYKNNCIRTQKKQKVFYWYSVPHDRLFLDALERDLKREKMGQEATTVAVSEPALSFEFDSSQSLYEQLTKAQQANSSSFAAHASTTYGQSASPVVRTVDAMPPPQMAPQMAPPSIPLLTDESANSQMYTSIPMPNPIPQNLIKREADYGAIQYDRNGMPIARIHQRHSSMPTFVEYSPAPSFVSSQYEDYSNRGLSFEPVTPPQHSSHIGPEPAYIANEDTGLYTAIPEMSTGSGFNPMMHLPPSNLASAHFPTPARTFHSNVYSVLEGSPTYKQRRRRSSIPPGAANPVTTGTHSPAPALSYAAHKPSDLRRSVSSSVAPGDTDDSRHESLHRSVNSTYTATLPQKNLMHEMSRNGTPLSSVGEHREQSSIPLTQAEDLPALPANGTVESGAPNGVGHKSDRYATGPVRRARSATMMELGPYPQKSHSCPIPSCGRLFKRLEHLKRHVRTHTQERPYPCPYCNKAFSRSDNLAQHRRIHEAQQDGQPLVHEDDLENDDNESVSHDEDESPSESVHPAVPGVHGMTSMPSSVALQSTMGSMMGSHMIAPQLLQQQI.

Residues 56–165 mediate DNA binding; sequence DQLIRRFLLP…SVPHDRLFLD (110 aa). Disordered stretches follow at residues 406–507 and 519–540; these read SPTY…EQSS and LPAN…SDRY. Residues 470-482 are compositionally biased toward polar residues; it reads RSVNSTYTATLPQ. 2 C2H2-type zinc fingers span residues 564–588 and 594–616; these read HSCP…VRTH and YPCP…RRIH. Positions 618-665 are disordered; it reads AQQDGQPLVHEDDLENDDNESVSHDEDESPSESVHPAVPGVHGMTSMP. Residues 629 to 647 show a composition bias toward acidic residues; the sequence is DDLENDDNESVSHDEDESP.

It belongs to the STE12 transcription factor family.

The protein localises to the nucleus. Its function is as follows. Transcription factor involved in sexual reproduction. Required for cleistothecial development and ascosporogenesis. Not required for asexual reproduction (conidiation). May act to repress medA expression. The protein is Transcription factor steA (steA) of Emericella nidulans (strain FGSC A4 / ATCC 38163 / CBS 112.46 / NRRL 194 / M139) (Aspergillus nidulans).